Reading from the N-terminus, the 1065-residue chain is Presequence protease, mitochondrial (1065 aa).

The N-terminal 42 residues, 1–42, are a transit peptide targeting the mitochondrion; the sequence is MLRSFSGAGKCKCRIPVSRQPVCGRSLRISSTLTPWNQSRRA. A Zn(2+)-binding site is contributed by histidine 117. Residue glutamate 120 is the Proton acceptor of the active site. Histidine 121 is a binding site for Zn(2+). Residue glutamate 193 is part of the active site. Glutamate 230 lines the Zn(2+) pocket.

The protein belongs to the peptidase M16 family. PreP subfamily. As to quaternary structure, monomer and homodimer; homodimerization is induced by binding of the substrate. The cofactor is Zn(2+).

The protein localises to the mitochondrion intermembrane space. It localises to the mitochondrion matrix. Functionally, degrades mitochondrial transit peptides after their cleavage in the intermembrane space or in the matrix, and presequence peptides; clearance of these peptides is required to keep the presequence processing machinery running. Preferentially cleaves the N-terminal side of paired basic amino acid residues. Also degrades other unstructured peptides. May function as an ATP-dependent peptidase as opposed to a metalloendopeptidase. This is Presequence protease, mitochondrial (cym1) from Aspergillus fumigatus (strain ATCC MYA-4609 / CBS 101355 / FGSC A1100 / Af293) (Neosartorya fumigata).